Consider the following 218-residue polypeptide: Recombination protein RecR (218 aa).

The C4-type zinc finger occupies 56–71; it reads CRICCNISREEVCRIC. The region spanning 79–195 is the Toprim domain; it reads STICVVEEPK…VVSRLASGMP (117 aa).

Belongs to the RecR family.

Its function is as follows. May play a role in DNA repair. It seems to be involved in an RecBC-independent recombinational process of DNA repair. It may act with RecF and RecO. The sequence is that of Recombination protein RecR from Corynebacterium diphtheriae (strain ATCC 700971 / NCTC 13129 / Biotype gravis).